A 316-amino-acid polypeptide reads, in one-letter code: UPF0324 membrane protein SO_4708 (316 aa).

A run of 9 helical transmembrane segments spans residues Leu61–Glu80, Asn85–Leu107, Gly114–Val136, Ala146–Leu168, Phe175–Gly197, Ile207–Phe226, Leu233–Leu252, Leu262–Ile281, and Pro293–Phe315.

Belongs to the UPF0324 family.

Its subcellular location is the cell membrane. This is UPF0324 membrane protein SO_4708 from Shewanella oneidensis (strain ATCC 700550 / JCM 31522 / CIP 106686 / LMG 19005 / NCIMB 14063 / MR-1).